The sequence spans 197 residues: Large ribosomal subunit protein uL22 (197 aa).

Residues glutamate 118–aspartate 197 are disordered. Residues alanine 149–alanine 165 show a composition bias toward low complexity. Basic residues predominate over residues threonine 172 to proline 183. Residues alanine 184–aspartate 197 show a composition bias toward low complexity.

The protein belongs to the universal ribosomal protein uL22 family. In terms of assembly, part of the 50S ribosomal subunit.

Its function is as follows. This protein binds specifically to 23S rRNA; its binding is stimulated by other ribosomal proteins, e.g. L4, L17, and L20. It is important during the early stages of 50S assembly. It makes multiple contacts with different domains of the 23S rRNA in the assembled 50S subunit and ribosome. Functionally, the globular domain of the protein is located near the polypeptide exit tunnel on the outside of the subunit, while an extended beta-hairpin is found that lines the wall of the exit tunnel in the center of the 70S ribosome. The polypeptide is Large ribosomal subunit protein uL22 (Mycobacterium bovis (strain ATCC BAA-935 / AF2122/97)).